The sequence spans 379 residues: Gonadotropin-releasing hormone II receptor (379 aa).

The Extracellular portion of the chain corresponds to methionine 1–arginine 40. A helical transmembrane segment spans residues valine 41 to tryptophan 60. At serine 61–arginine 76 the chain is on the cytoplasmic side. The chain crosses the membrane as a helical span at residues threonine 77–leucine 96. Residues aspartate 97 to arginine 114 lie on the Extracellular side of the membrane. Asparagine 101 carries N-linked (GlcNAc...) asparagine glycosylation. A disulfide bridge links cysteine 113 with cysteine 188. The chain crosses the membrane as a helical span at residues threonine 115 to leucine 136. Residues aspartate 137–tryptophan 160 lie on the Cytoplasmic side of the membrane. A helical transmembrane segment spans residues glycine 161–histidine 178. Residues arginine 179 to asparagine 204 are Extracellular-facing. The helical transmembrane segment at leucine 205 to serine 224 threads the bilayer. The Cytoplasmic portion of the chain corresponds to arginine 225–threonine 278. The helical transmembrane segment at proline 279–valine 297 threads the bilayer. The Extracellular segment spans residues proline 298–histidine 303. Residues isoleucine 304–phenylalanine 323 form a helical membrane-spanning segment. Residues threonine 324–isoleucine 379 lie on the Cytoplasmic side of the membrane.

It belongs to the G-protein coupled receptor 1 family. Phosphorylated on the C-terminal cytoplasmic tail.

It localises to the cell membrane. Functionally, receptor for gonadotropin releasing hormone II (GnRH II). This receptor mediates its action by association with G proteins that activate a phosphatidylinositol-calcium second messenger system. The protein is Gonadotropin-releasing hormone II receptor (GNRHR2) of Chlorocebus aethiops (Green monkey).